Reading from the N-terminus, the 125-residue chain is Histone H1-like protein Hc1 (125 aa).

Positions threonine 98–lysine 125 are disordered. A compositionally biased stretch (basic residues) spans alanine 100–lysine 125.

Belongs to the histone H1/H5 family. HCT subfamily.

Functionally, might have a role analogous to that of eukaryotic histone proteins. The polypeptide is Histone H1-like protein Hc1 (hctA) (Chlamydia trachomatis serovar D (strain ATCC VR-885 / DSM 19411 / UW-3/Cx)).